The following is a 299-amino-acid chain: MKKWTIAASLSIGVLALSACNSDDEIVAETEAGNITKEEFYEELKDVNGESTLQQLVTVKVLEDNYEVTDEELEEEISTMKEGFPSEEDFNTTVEQQFGGEEQLREIMYVSMLQEKAAAEDVEITEEDLQELYERKNTEIQAQHILLENEEDVAEVQQKIEDGEDFGELAQEYSTDTGSAENGGDLGYFSAGSMVPEFEEAAFSLEAGEISDPVQSTHGTHIIKVNDVREKEESIGEFEDVKKELEREILLNRVDQTQIQEKINKLIQDAGVQINVEGMEDLFEAEETEENTTEEDAQG.

An N-terminal signal peptide occupies residues 1–19 (MKKWTIAASLSIGVLALSA). C20 is lipidated: N-palmitoyl cysteine. C20 carries S-diacylglycerol cysteine lipidation. A PpiC domain is found at 137–227 (NTEIQAQHIL…HGTHIIKVND (91 aa)).

It belongs to the PrsA family.

It is found in the cell membrane. It carries out the reaction [protein]-peptidylproline (omega=180) = [protein]-peptidylproline (omega=0). In terms of biological role, plays a major role in protein secretion by helping the post-translocational extracellular folding of several secreted proteins. This Oceanobacillus iheyensis (strain DSM 14371 / CIP 107618 / JCM 11309 / KCTC 3954 / HTE831) protein is Foldase protein PrsA.